The primary structure comprises 467 residues: Glutamate--tRNA ligase (467 aa).

The 'HIGH' region motif lies at 14–24; the sequence is PSPTGFLHLGG. Residues 124-134 show a composition bias toward basic and acidic residues; sequence PRYDGTWRPEP. The interval 124-156 is disordered; that stretch reads PRYDGTWRPEPGKTLPPVPAGRKPVVRFKNPQD. Residues 246-250 carry the 'KMSKS' region motif; the sequence is KLSKR. K249 is a binding site for ATP.

The protein belongs to the class-I aminoacyl-tRNA synthetase family. Glutamate--tRNA ligase type 1 subfamily. Monomer.

The protein resides in the cytoplasm. It catalyses the reaction tRNA(Glu) + L-glutamate + ATP = L-glutamyl-tRNA(Glu) + AMP + diphosphate. Functionally, catalyzes the attachment of glutamate to tRNA(Glu) in a two-step reaction: glutamate is first activated by ATP to form Glu-AMP and then transferred to the acceptor end of tRNA(Glu). The chain is Glutamate--tRNA ligase from Bordetella petrii (strain ATCC BAA-461 / DSM 12804 / CCUG 43448).